The sequence spans 917 residues: Auxin response factor 17 (917 aa).

Residues 134–236 (FCKTLTASDT…QLLLGIRRAN (103 aa)) constitute a DNA-binding region (TF-B3). Positions 571–649 (SVPNALSPFS…RPTAVPVPDP (79 aa)) are disordered. Composition is skewed to low complexity over residues 576 to 594 (LSPF…MTLQ) and 604 to 620 (SYPD…NTST). Residues 786–870 (ATFVKVYKSG…SCIKILSPQE (85 aa)) form the PB1 domain.

Belongs to the ARF family. In terms of assembly, homodimers and heterodimers.

It is found in the nucleus. Its function is as follows. Auxin response factors (ARFs) are transcriptional factors that bind specifically to the DNA sequence 5'-TGTCTC-3' found in the auxin-responsive promoter elements (AuxREs). The protein is Auxin response factor 17 (ARF17) of Oryza sativa subsp. indica (Rice).